A 377-amino-acid polypeptide reads, in one-letter code: Killer cell immunoglobulin-like receptor 2DL4 (377 aa).

Positions 1 to 21 (MSMSPTVIILACLGFFLDQSV) are cleaved as a signal peptide. The Extracellular segment spans residues 22-242 (WAHVGGQDKP…FKTGIARHLH (221 aa)). Ig-like C2-type domains follow at residues 44–104 (GGHV…HPHS) and 139–202 (GENV…FHGS). Cys51 and Cys97 are oxidised to a cystine. N-linked (GlcNAc...) asparagine glycans are attached at residues Asn141 and Asn175. Cys146 and Cys195 are joined by a disulfide. The helical transmembrane segment at 243–263 (AVIRYSVAIILFTILPFFLLH) threads the bilayer. The Cytoplasmic portion of the chain corresponds to 264–377 (RWCSKKKDAA…ASSNVPAAGI (114 aa)). The segment at 338-377 (PRALSPAHEHHSQALMGSSRETTALSQTQLASSNVPAAGI) is disordered. A compositionally biased stretch (polar residues) spans 352–377 (LMGSSRETTALSQTQLASSNVPAAGI).

Belongs to the immunoglobulin superfamily. Interacts with peptide-bound HLA-G-B2M heterotrimeric complex. Interacts with ARRB2. In terms of tissue distribution, expressed in decidual NK cells and innate lymphoid cell type I (ILC1). Expressed in a subset of peripheral NK cells.

It localises to the cell membrane. The protein localises to the early endosome membrane. Receptor for non-classical major histocompatibility class Ib HLA-G molecules. Recognizes HLA-G in complex with B2M/beta-2 microglobulin and a nonamer self-peptide (peptide-bound HLA-G-B2M). In decidual NK cells, binds peptide-bound HLA-G-B2M complex and triggers NK cell senescence-associated secretory phenotype as a molecular switch to promote vascular remodeling and fetal growth in early pregnancy. May play a role in balancing tolerance and antiviral-immunity at maternal-fetal interface by keeping in check the effector functions of NK, CD8+ T cells and B cells. Upon interaction with peptide-bound HLA-G-B2M, initiates signaling from the endosomal compartment leading to downstream activation of PRKDC-XRCC5 and AKT1, and ultimately triggering NF-kappa-B-dependent pro-inflammatory response. The polypeptide is Killer cell immunoglobulin-like receptor 2DL4 (Homo sapiens (Human)).